The chain runs to 139 residues: Transcription antitermination protein NusB (139 aa).

Belongs to the NusB family.

Its function is as follows. Involved in transcription antitermination. Required for transcription of ribosomal RNA (rRNA) genes. Binds specifically to the boxA antiterminator sequence of the ribosomal RNA (rrn) operons. This is Transcription antitermination protein NusB from Edwardsiella ictaluri (strain 93-146).